Reading from the N-terminus, the 239-residue chain is MICOS complex subunit mic25a (239 aa).

G2 carries the N-myristoyl glycine lipid modification. Disordered stretches follow at residues 27–88 and 113–133; these read VKLS…KKRY and DISR…ERAK. The span at 50–78 shows a compositional bias: polar residues; that stretch reads NKENQGHQTRTPSTSDAQAPKTQAKTTFP. The span at 79–88 shows a compositional bias: basic and acidic residues; sequence DSKEELKKRY. Residues 79-166 are a coiled coil; it reads DSKEELKKRY…ITQLEKKNEE (88 aa). Residues 192–234 form the CHCH domain; that stretch reads EPVCLNLQAQILNCYRENREQTLQCSDLAKEYMQCINAAKKNL. 2 short sequence motifs (cx9C motif) span residues 195 to 205 and 216 to 226; these read CLNLQAQILNC and CSDLAKEYMQC. Intrachain disulfides connect C195/C226 and C205/C216.

The protein belongs to the MICOS complex subunit Mic19 family. Metazoan Mic25 subfamily. In terms of assembly, component of the mitochondrial contact site and cristae organizing system (MICOS) complex (also known as MINOS or MitOS complex).

Its subcellular location is the mitochondrion inner membrane. Its function is as follows. Component of the MICOS complex, a large protein complex of the mitochondrial inner membrane that plays crucial roles in the maintenance of crista junctions, inner membrane architecture, and formation of contact sites to the outer membrane. The polypeptide is MICOS complex subunit mic25a (chchd6a) (Danio rerio (Zebrafish)).